A 142-amino-acid polypeptide reads, in one-letter code: Transcription antitermination protein NusB (142 aa).

This sequence belongs to the NusB family.

Functionally, involved in transcription antitermination. Required for transcription of ribosomal RNA (rRNA) genes. Binds specifically to the boxA antiterminator sequence of the ribosomal RNA (rrn) operons. This chain is Transcription antitermination protein NusB, found in Actinobacillus succinogenes (strain ATCC 55618 / DSM 22257 / CCUG 43843 / 130Z).